Here is a 504-residue protein sequence, read N- to C-terminus: Anaerobic nitric oxide reductase transcription regulator NorR (504 aa).

Position 57 is a 4-aspartylphosphate (Asp57). Residues 187-416 (MIGLSPGMTQ…LEHAIHRAVV (230 aa)) form the Sigma-54 factor interaction domain. ATP-binding positions include 215–222 (GETGTGKE) and 278–287 (ADNGTLFLDE). The segment at residues 479 to 498 (WAACARMLETDVANLHRLAK) is a DNA-binding region (H-T-H motif).

Its pathway is nitrogen metabolism; nitric oxide reduction. In terms of biological role, required for the expression of anaerobic nitric oxide (NO) reductase, acts as a transcriptional activator for at least the norVW operon. Activation also requires sigma-54. The chain is Anaerobic nitric oxide reductase transcription regulator NorR from Escherichia coli (strain ATCC 8739 / DSM 1576 / NBRC 3972 / NCIMB 8545 / WDCM 00012 / Crooks).